We begin with the raw amino-acid sequence, 162 residues long: Protein-export protein SecB (162 aa).

Belongs to the SecB family. As to quaternary structure, homotetramer, a dimer of dimers. One homotetramer interacts with 1 SecA dimer.

It localises to the cytoplasm. In terms of biological role, one of the proteins required for the normal export of preproteins out of the cell cytoplasm. It is a molecular chaperone that binds to a subset of precursor proteins, maintaining them in a translocation-competent state. It also specifically binds to its receptor SecA. The protein is Protein-export protein SecB of Pseudoalteromonas translucida (strain TAC 125).